The chain runs to 113 residues: uncharacterized protein (113 aa).

The segment at 16–96 (LVDNETRCFH…STVHCKYCNH (81 aa)) adopts a CHY-type; degenerate zinc-finger fold. 8 residues coordinate Zn(2+): cysteine 23, histidine 25, cysteine 46, cysteine 49, cysteine 73, cysteine 76, cysteine 91, and cysteine 94.

It localises to the cytoplasm. It is found in the nucleus. This is an uncharacterized protein from Schizosaccharomyces pombe (strain 972 / ATCC 24843) (Fission yeast).